Here is a 341-residue protein sequence, read N- to C-terminus: Cell division protein ZipA (341 aa).

Topologically, residues 1 to 6 (MENLQL) are periplasmic. Residues 7–27 (VLFVLGAIAIVAVLVHGFWSI) traverse the membrane as a helical segment. Over 28–341 (RKQQPKSLKE…YLQRIRTQNS (314 aa)) the chain is Cytoplasmic. Disordered regions lie at residues 35–134 (LKES…PVLS) and 157–201 (QSSL…PEPE). A compositionally biased stretch (polar residues) spans 90–100 (TLTSEGQMDSS). Positions 175-190 (SIEVPEPVSEPVLESV) are enriched in low complexity. The segment covering 192-201 (EPEPVAPEPE) has biased composition (pro residues).

The protein belongs to the ZipA family. As to quaternary structure, interacts with FtsZ via their C-terminal domains.

It is found in the cell inner membrane. In terms of biological role, essential cell division protein that stabilizes the FtsZ protofilaments by cross-linking them and that serves as a cytoplasmic membrane anchor for the Z ring. Also required for the recruitment to the septal ring of downstream cell division proteins. This Shewanella sediminis (strain HAW-EB3) protein is Cell division protein ZipA.